The chain runs to 67 residues: Probable Sec-independent protein translocase protein TatE (67 aa).

The helical transmembrane segment at 1–21 (MEGISIAKLLIIGALIVLLFG) threads the bilayer. The tract at residues 44–67 (KDEDTSAARTTAEETPAERVSHKD) is disordered.

The protein belongs to the TatA/E family. TatE subfamily.

Its subcellular location is the cell inner membrane. In terms of biological role, part of the twin-arginine translocation (Tat) system that transports large folded proteins containing a characteristic twin-arginine motif in their signal peptide across membranes. TatE shares overlapping functions with TatA. The protein is Probable Sec-independent protein translocase protein TatE of Pantoea ananatis (strain LMG 20103).